A 75-amino-acid polypeptide reads, in one-letter code: MGALWSLCRRRVNSIGDVDGGIINLYNDYEEFNLETTKLIAAEEGRACGETNEGLEYDEDSENDELLFLPNKKPN.

A lipid anchor (N-myristoyl glycine; by host) is attached at G2. A compositionally biased stretch (acidic residues) spans 53–65; that stretch reads EGLEYDEDSENDE. Residues 53 to 75 form a disordered region; it reads EGLEYDEDSENDELLFLPNKKPN.

It belongs to the herpesviridae cytoplasmic envelopment protein 3 family. In terms of assembly, interacts with BGLF2; this interaction is essential for the proper localization of each protein to the assembly complex and thus for the production of infectious virus. Post-translationally, myristoylation and palmitoylation (probably on one or more of the nearby cysteines at the N-terminus) enable membrane-binding and Golgi apparatus-specific targeting and are essential for efficient packaging. Phosphorylated. Phosphorylation does not seem to be required for recycling to the host Golgi apparatus. Packaging is selective for underphosphorylated forms.

It is found in the virion tegument. The protein resides in the virion membrane. Its subcellular location is the host cell membrane. The protein localises to the host Golgi apparatus membrane. Its function is as follows. Plays an important role in the cytoplasmic envelopment of tegument proteins and capsids during the assembly and egress processes. Also participates in viral entry at the fusion step probably by regulating the core fusion machinery. This is Cytoplasmic envelopment protein 3 from Homo sapiens (Human).